The chain runs to 189 residues: Large ribosomal subunit protein bL9 (189 aa).

Belongs to the bacterial ribosomal protein bL9 family.

Binds to the 23S rRNA. The sequence is that of Large ribosomal subunit protein bL9 from Cereibacter sphaeroides (strain ATCC 17025 / ATH 2.4.3) (Rhodobacter sphaeroides).